Here is a 703-residue protein sequence, read N- to C-terminus: Polyribonucleotide nucleotidyltransferase (703 aa).

The Mg(2+) site is built by D486 and D492. Positions 553–612 (PKIEIIHINPDKIRDVIGPGGKKINEIIDATGVKLDIEQDGTVFIGSSDASMIEAAKKLI) constitute a KH domain. In terms of domain architecture, S1 motif spans 622–690 (GQIYMATVKR…KQGRVNASRK (69 aa)).

The protein belongs to the polyribonucleotide nucleotidyltransferase family. Mg(2+) is required as a cofactor.

Its subcellular location is the cytoplasm. The catalysed reaction is RNA(n+1) + phosphate = RNA(n) + a ribonucleoside 5'-diphosphate. Involved in mRNA degradation. Catalyzes the phosphorolysis of single-stranded polyribonucleotides processively in the 3'- to 5'-direction. This chain is Polyribonucleotide nucleotidyltransferase, found in Macrococcus caseolyticus (strain JCSC5402) (Macrococcoides caseolyticum).